Here is a 197-residue protein sequence, read N- to C-terminus: Probable nicotinate-nucleotide adenylyltransferase (197 aa).

The protein belongs to the NadD family.

It catalyses the reaction nicotinate beta-D-ribonucleotide + ATP + H(+) = deamido-NAD(+) + diphosphate. Its pathway is cofactor biosynthesis; NAD(+) biosynthesis; deamido-NAD(+) from nicotinate D-ribonucleotide: step 1/1. In terms of biological role, catalyzes the reversible adenylation of nicotinate mononucleotide (NaMN) to nicotinic acid adenine dinucleotide (NaAD). The chain is Probable nicotinate-nucleotide adenylyltransferase from Leptospira borgpetersenii serovar Hardjo-bovis (strain JB197).